A 330-amino-acid chain; its full sequence is Neurogenic differentiation factor 4 (330 aa).

The disordered stretch occupies residues 1–79 (MTKTYTKAKE…RGPKKKKMTK (79 aa)). The span at 25–35 (LSSKDELKAEN) shows a compositional bias: basic and acidic residues. Acidic residues predominate over residues 52 to 64 (DSIEEEEEEEDDG). Residues 67 to 79 (PKRRGPKKKKMTK) are compositionally biased toward basic residues. The short motif at 73-79 (KKKKMTK) is the Nuclear localization signal element. Positions 87–139 (ARRVKANARERTRMHGLNDALDNLRRVMPCYSKTQKLSKIETLRLARNYIWAL) constitute a bHLH domain. The segment at 162–183 (LSQPTSNLVAGCLQLGPQTLFL) is leucine-zipper.

As to quaternary structure, efficient DNA binding requires dimerization with another bHLH protein. Serine or threonine phosphorylation within the basic region may regulate neurogenic activity. Expressed in both the developing central nervous system and peripheral nervous system.

The protein localises to the nucleus. In terms of biological role, probably acts as a transcriptional activator. Mediates neuronal differentiation. Required for the regulation of amacrine cell fate specification in the retina. The polypeptide is Neurogenic differentiation factor 4 (NEUROD4) (Gallus gallus (Chicken)).